We begin with the raw amino-acid sequence, 187 residues long: Dihydrofolate reductase (187 aa).

Residues 4–185 form the DHFR domain; that stretch reads PLNCIVAVSQ…IKYKFEVYEK (182 aa). NADP(+) is bound by residues Ala-10 and 16–22; that span reads GIGKNGD. 31 to 36 contacts substrate; it reads EFKYFQ. An N6-acetyllysine; alternate modification is found at Lys-33. Position 33 is an N6-succinyllysine; alternate (Lys-33). 55–57 contacts NADP(+); sequence RKT. Residues Asn-65 and Arg-71 each coordinate substrate. Residues 77–79 and 117–124 contribute to the NADP(+) site; these read SRE and GGSSVYQE.

This sequence belongs to the dihydrofolate reductase family. As to quaternary structure, homodimer.

The protein resides in the mitochondrion. The protein localises to the cytoplasm. The catalysed reaction is (6S)-5,6,7,8-tetrahydrofolate + NADP(+) = 7,8-dihydrofolate + NADPH + H(+). Its pathway is cofactor biosynthesis; tetrahydrofolate biosynthesis; 5,6,7,8-tetrahydrofolate from 7,8-dihydrofolate: step 1/1. Functionally, key enzyme in folate metabolism. Contributes to the de novo mitochondrial thymidylate biosynthesis pathway. Catalyzes an essential reaction for de novo glycine and purine synthesis, and for DNA precursor synthesis. Binds its own mRNA. The protein is Dihydrofolate reductase (Dhfr) of Mus musculus (Mouse).